The primary structure comprises 177 residues: UPF0200 protein STK_09500 (177 aa).

ATP is bound at residue 11–18; it reads GMPGSGKG.

The protein belongs to the UPF0200 family.

This chain is UPF0200 protein STK_09500, found in Sulfurisphaera tokodaii (strain DSM 16993 / JCM 10545 / NBRC 100140 / 7) (Sulfolobus tokodaii).